The following is a 220-amino-acid chain: MQDSSYKKQVTQAFDQSSSTYDRLGVEFFTPMGRRLVDISEPVTGERVLDIGCGRGACLFPAAEKVGSQGCVHGIDIAPGMIEEARKEATERGLRNISLMVMDAETPGFPARSFDLVMGSYSVIFLPDAVGALARYADILDHGGRIAFTSPVFRAGTFPFLPPEFTPLIPQALLEHLPEQWRPEALVRRFNSWLERAEDLVRTLEGCGYARLRQSTSRCG.

It belongs to the methyltransferase superfamily. DnrC family. As to quaternary structure, homodimer.

The enzyme catalyses aklanonate + S-adenosyl-L-methionine = methyl aklanonate + S-adenosyl-L-homocysteine. It participates in antibiotic biosynthesis; daunorubicin biosynthesis. The protein operates within antibiotic biosynthesis; carminomycin biosynthesis. It functions in the pathway antibiotic biosynthesis; rhodomycin biosynthesis. Its pathway is antibiotic biosynthesis; aclacinomycin biosynthesis. Functionally, involved in the biosynthesis of aklavinone which is an important precursor common to the formation of the clinically significant anthracyclines such as carminomycin, daunorubicin (daunomycin), rhodomycin, aclacinomycin T (aklavin) and aclacinomycin A (aclarubicin). These compounds are aromatic polyketide antibiotics that exhibit high cytotoxicity and are widely applied in the chemotherapy of a variety of cancers. Catalyzes the methyl esterification of aklanonic acid to yield aklanonic acid methyl ester. In Streptomyces sp. (strain C5), this protein is Aklanonic acid methyltransferase DauC (dauC).